A 254-amino-acid polypeptide reads, in one-letter code: MDKLIIGGVEIKNRLFVGSGKYPSNEIIKDVLEGSGSQVITLALRRVDLDNKEEDILQNIPKDVILLPNTSGATNAEEAIRIARIARAMGCGNWIKIEVISDSKYLLPDNEETIKATKVLADEGFIVLPYMCPDLYAGRRLIEAGAAAVMPLGAPIGSNRGLKTKELIQIMIDELDIPIIVDAGIGKPSQAMEAMEMGAAACLVNTAIASSEDPINMARAFKMAVEGGRLAYEAKMGRESKFGNASSPLTGFLD.

The active-site Schiff-base intermediate with DXP is Lys-96. 1-deoxy-D-xylulose 5-phosphate-binding positions include Gly-157, 183–184 (AG), and 205–206 (NT).

Belongs to the ThiG family. In terms of assembly, homotetramer. Forms heterodimers with either ThiH or ThiS.

It localises to the cytoplasm. The enzyme catalyses [ThiS sulfur-carrier protein]-C-terminal-Gly-aminoethanethioate + 2-iminoacetate + 1-deoxy-D-xylulose 5-phosphate = [ThiS sulfur-carrier protein]-C-terminal Gly-Gly + 2-[(2R,5Z)-2-carboxy-4-methylthiazol-5(2H)-ylidene]ethyl phosphate + 2 H2O + H(+). It participates in cofactor biosynthesis; thiamine diphosphate biosynthesis. Its function is as follows. Catalyzes the rearrangement of 1-deoxy-D-xylulose 5-phosphate (DXP) to produce the thiazole phosphate moiety of thiamine. Sulfur is provided by the thiocarboxylate moiety of the carrier protein ThiS. In vitro, sulfur can be provided by H(2)S. This Clostridium perfringens (strain SM101 / Type A) protein is Thiazole synthase.